A 123-amino-acid polypeptide reads, in one-letter code: Protein Wnt-7 (123 aa).

Ser-1 carries O-palmitoleoyl serine; by PORCN lipidation. Cys-89 and Cys-104 are joined by a disulfide. N-linked (GlcNAc...) asparagine glycosylation occurs at Asn-90.

This sequence belongs to the Wnt family. In terms of processing, palmitoleoylation is required for efficient binding to frizzled receptors. Depalmitoleoylation leads to Wnt signaling pathway inhibition.

Its subcellular location is the secreted. It is found in the extracellular space. The protein localises to the extracellular matrix. Functionally, ligand for members of the frizzled family of seven transmembrane receptors. Probable developmental protein. May be a signaling molecule which affects the development of discrete regions of tissues. Is likely to signal over only few cell diameters. The protein is Protein Wnt-7 (WNT-7) of Evasterias troschelii (Mottled sea star).